A 317-amino-acid chain; its full sequence is Small ribosomal subunit biogenesis GTPase RsgA (317 aa).

The region spanning 88 to 249 (DQYKSKLFAA…LIDSPGFQEF (162 aa)) is the CP-type G domain. Residues 136–139 (NKID) and 190–198 (GQSGMGKST) contribute to the GTP site. 4 residues coordinate Zn(2+): cysteine 273, cysteine 278, histidine 280, and cysteine 286.

Belongs to the TRAFAC class YlqF/YawG GTPase family. RsgA subfamily. Monomer. Associates with 30S ribosomal subunit, binds 16S rRNA. It depends on Zn(2+) as a cofactor.

It localises to the cytoplasm. Functionally, one of several proteins that assist in the late maturation steps of the functional core of the 30S ribosomal subunit. Helps release RbfA from mature subunits. May play a role in the assembly of ribosomal proteins into the subunit. Circularly permuted GTPase that catalyzes slow GTP hydrolysis, GTPase activity is stimulated by the 30S ribosomal subunit. This is Small ribosomal subunit biogenesis GTPase RsgA from Paraburkholderia phymatum (strain DSM 17167 / CIP 108236 / LMG 21445 / STM815) (Burkholderia phymatum).